The sequence spans 215 residues: GTP-binding protein YPT6 (215 aa).

17 to 24 provides a ligand contact to GTP; it reads GEQGVGKT. An Effector region motif is present at residues 39–47; sequence YQATIGIDF. GTP-binding positions include 65 to 69 and 124 to 127; these read DTAGQ and NKSD. The span at 178–196 shows a compositional bias: polar residues; that stretch reads NSESTPLDSENANSANQNK. Residues 178 to 215 are disordered; that stretch reads NSESTPLDSENANSANQNKPGVIDISTAEEQEQSACQC. Residues C213 and C215 are each lipidated (S-geranylgeranyl cysteine). At C215 the chain carries Cysteine methyl ester.

It belongs to the small GTPase superfamily. Rab family. In terms of assembly, interacts with YIF1, YIP3 and YIP4.

It is found in the cell membrane. In terms of biological role, protein transport. Might participate in post-Golgi transport. The protein is GTP-binding protein YPT6 (YPT6) of Saccharomyces cerevisiae (strain ATCC 204508 / S288c) (Baker's yeast).